A 1236-amino-acid chain; its full sequence is DNA topoisomerase 2 (1236 aa).

Residues Asn-65, Asn-96, 124-126 (SSN), 137-144 (GRHGYGAK), and 354-356 (QSK) contribute to the ATP site. A Toprim domain is found at 434–548 (RTLIITEGDS…KLLQNNPGYI (115 aa)). Residues Glu-440, Asp-517, and Asp-519 each contribute to the Mg(2+) site. The region spanning 685 to 1101 (IPHCVDGLKP…TPVKMWLTEL (417 aa)) is the Topo IIA-type catalytic domain. Tyr-775 (O-(5'-phospho-DNA)-tyrosine intermediate) is an active-site residue. The interaction with DNA stretch occupies residues 956 to 965 (ALAQRIYING). The segment at 1161 to 1211 (YEKPPPSKRRPGESVGGARPSDSAARTVGKRLVGSRSEFKNKKPMSRKNNV) is disordered.

The protein belongs to the type II topoisomerase family. In terms of assembly, homodimer. It depends on Mg(2+) as a cofactor. The cofactor is Mn(2+). Ca(2+) is required as a cofactor.

The protein resides in the nucleus. The catalysed reaction is ATP-dependent breakage, passage and rejoining of double-stranded DNA.. Control of topological states of DNA by transient breakage and subsequent rejoining of DNA strands. Topoisomerase II makes double-strand breaks. The chain is DNA topoisomerase 2 (TOP2) from Leishmania chagasi.